We begin with the raw amino-acid sequence, 268 residues long: Leucyl/phenylalanyl-tRNA--protein transferase (268 aa).

This sequence belongs to the L/F-transferase family.

It localises to the cytoplasm. It catalyses the reaction N-terminal L-lysyl-[protein] + L-leucyl-tRNA(Leu) = N-terminal L-leucyl-L-lysyl-[protein] + tRNA(Leu) + H(+). It carries out the reaction N-terminal L-arginyl-[protein] + L-leucyl-tRNA(Leu) = N-terminal L-leucyl-L-arginyl-[protein] + tRNA(Leu) + H(+). The catalysed reaction is L-phenylalanyl-tRNA(Phe) + an N-terminal L-alpha-aminoacyl-[protein] = an N-terminal L-phenylalanyl-L-alpha-aminoacyl-[protein] + tRNA(Phe). In terms of biological role, functions in the N-end rule pathway of protein degradation where it conjugates Leu, Phe and, less efficiently, Met from aminoacyl-tRNAs to the N-termini of proteins containing an N-terminal arginine or lysine. The chain is Leucyl/phenylalanyl-tRNA--protein transferase from Psychrobacter arcticus (strain DSM 17307 / VKM B-2377 / 273-4).